The primary structure comprises 122 residues: Large ribosomal subunit protein uL14 (122 aa).

The protein belongs to the universal ribosomal protein uL14 family. Part of the 50S ribosomal subunit. Forms a cluster with proteins L3 and L19. In the 70S ribosome, L14 and L19 interact and together make contacts with the 16S rRNA in bridges B5 and B8.

Binds to 23S rRNA. Forms part of two intersubunit bridges in the 70S ribosome. The polypeptide is Large ribosomal subunit protein uL14 (Streptococcus thermophilus (strain CNRZ 1066)).